We begin with the raw amino-acid sequence, 316 residues long: Epiphycan (316 aa).

The first 23 residues, M1–T23, serve as a signal peptide directing secretion. S98 is a glycosylation site (O-linked (Xyl...) (dermatan sulfate) serine). The region spanning V100 to K137 is the LRRNT domain. C112 and C124 form a disulfide bridge. LRR repeat units lie at residues N138–N159, N162–R183, Q186–L207, E232–E252, S253–K274, and A284–Y304. An intrachain disulfide couples C273 to C306. N296 is a glycosylation site (N-linked (GlcNAc...) asparagine).

Belongs to the small leucine-rich proteoglycan (SLRP) family. SLRP class III subfamily. The O-linked glycosaminoglycan chain(s) are dermatan sulfate. As to expression, preferentially expressed in flattened chondrocytes of developing chick limb cartilage. Also found in the cartilage peripheral zone bordering with bone marrow cavity.

It localises to the secreted. Its subcellular location is the extracellular space. It is found in the extracellular matrix. May have a role in bone formation and also in establishing the ordered structure of cartilage through matrix organization. This chain is Epiphycan (EPYC), found in Gallus gallus (Chicken).